Reading from the N-terminus, the 375-residue chain is Succinyl-diaminopimelate desuccinylase (375 aa).

Residue His-66 participates in Zn(2+) binding. Asp-68 is a catalytic residue. Asp-99 is a binding site for Zn(2+). Glu-133 serves as the catalytic Proton acceptor. Glu-134, Glu-162, and His-348 together coordinate Zn(2+).

The protein belongs to the peptidase M20A family. DapE subfamily. Homodimer. Zn(2+) serves as cofactor. The cofactor is Co(2+).

The catalysed reaction is N-succinyl-(2S,6S)-2,6-diaminopimelate + H2O = (2S,6S)-2,6-diaminopimelate + succinate. It functions in the pathway amino-acid biosynthesis; L-lysine biosynthesis via DAP pathway; LL-2,6-diaminopimelate from (S)-tetrahydrodipicolinate (succinylase route): step 3/3. Catalyzes the hydrolysis of N-succinyl-L,L-diaminopimelic acid (SDAP), forming succinate and LL-2,6-diaminopimelate (DAP), an intermediate involved in the bacterial biosynthesis of lysine and meso-diaminopimelic acid, an essential component of bacterial cell walls. This Salmonella dublin (strain CT_02021853) protein is Succinyl-diaminopimelate desuccinylase.